Consider the following 20-residue polypeptide: Acidic phospholipase A2 CbIbeta (20 aa).

It belongs to the phospholipase A2 family. Group II subfamily. D49 sub-subfamily. As to quaternary structure, heterodimer of an acidic subunit (CbIalpha or CbIbeta) and a basic subunit (CbII). The acidic subunit (CbI) is non-toxic, and increases the toxicity of the basic subunit (CbII). Ca(2+) serves as cofactor. Post-translationally, contains 7 disulfide bonds. In terms of tissue distribution, expressed by the venom gland.

It localises to the secreted. It carries out the reaction a 1,2-diacyl-sn-glycero-3-phosphocholine + H2O = a 1-acyl-sn-glycero-3-phosphocholine + a fatty acid + H(+). In terms of biological role, heterodimer: presynaptic neurotoxin. Functionally, monomer: Snake venom phospholipase A2 (PLA2) is inactive towards micellar phosphatidylcholine but is weakly active towards non-micellar dithiolecithin. PLA2 catalyzes the calcium-dependent hydrolysis of the 2-acyl groups in 3-sn-phosphoglycerides. The chain is Acidic phospholipase A2 CbIbeta from Pseudocerastes fieldi (Field's horned viper).